Consider the following 177-residue polypeptide: Large ribosomal subunit protein uL6 (177 aa).

The protein belongs to the universal ribosomal protein uL6 family. Part of the 50S ribosomal subunit.

In terms of biological role, this protein binds to the 23S rRNA, and is important in its secondary structure. It is located near the subunit interface in the base of the L7/L12 stalk, and near the tRNA binding site of the peptidyltransferase center. The chain is Large ribosomal subunit protein uL6 from Vibrio vulnificus (strain CMCP6).